Here is a 203-residue protein sequence, read N- to C-terminus: Protein S40-6 (203 aa).

Residues 1–33 (MAKGRKPTTMNRSDRYLGSYTYGDSHGNSVTDE) are disordered.

The protein belongs to the senescence regulator S40 family.

It localises to the cytoplasm. In Arabidopsis thaliana (Mouse-ear cress), this protein is Protein S40-6.